The chain runs to 170 residues: APRG1 tumor suppressor candidate (170 aa).

Residues 150–170 (IALALAGPGAILILELSWFLG) form a helical membrane-spanning segment.

As to expression, expressed at high levels in the pancreas and placenta. In terms of tissue distribution, expressed at high levels in the kidney.

Its subcellular location is the membrane. The protein is APRG1 tumor suppressor candidate of Homo sapiens (Human).